We begin with the raw amino-acid sequence, 723 residues long: Catalase-peroxidase (723 aa).

Positions tryptophan 96–tyrosine 224 form a cross-link, tryptophyl-tyrosyl-methioninium (Trp-Tyr) (with M-250). Histidine 97 (proton acceptor) is an active-site residue. The segment at residues tyrosine 224–methionine 250 is a cross-link (tryptophyl-tyrosyl-methioninium (Tyr-Met) (with W-96)). Histidine 265 is a binding site for heme b.

This sequence belongs to the peroxidase family. Peroxidase/catalase subfamily. In terms of assembly, homodimer or homotetramer. Requires heme b as cofactor. Post-translationally, formation of the three residue Trp-Tyr-Met cross-link is important for the catalase, but not the peroxidase activity of the enzyme.

The enzyme catalyses H2O2 + AH2 = A + 2 H2O. It carries out the reaction 2 H2O2 = O2 + 2 H2O. Functionally, bifunctional enzyme with both catalase and broad-spectrum peroxidase activity. In Marinobacter nauticus (strain ATCC 700491 / DSM 11845 / VT8) (Marinobacter aquaeolei), this protein is Catalase-peroxidase.